A 322-amino-acid chain; its full sequence is Phosphatidylserine decarboxylase proenzyme (322 aa).

Catalysis depends on charge relay system; for autoendoproteolytic cleavage activity residues D90, H147, and S254. S254 functions as the Schiff-base intermediate with substrate; via pyruvic acid; for decarboxylase activity in the catalytic mechanism. S254 is subject to Pyruvic acid (Ser); by autocatalysis. A disordered region spans residues 297–322 (PAPLPAEEIKAEHDASPLVDNKKDDT). Over residues 303–322 (EEIKAEHDASPLVDNKKDDT) the composition is skewed to basic and acidic residues.

It belongs to the phosphatidylserine decarboxylase family. PSD-B subfamily. Prokaryotic type I sub-subfamily. Heterodimer of a large membrane-associated beta subunit and a small pyruvoyl-containing alpha subunit. It depends on pyruvate as a cofactor. Is synthesized initially as an inactive proenzyme. Formation of the active enzyme involves a self-maturation process in which the active site pyruvoyl group is generated from an internal serine residue via an autocatalytic post-translational modification. Two non-identical subunits are generated from the proenzyme in this reaction, and the pyruvate is formed at the N-terminus of the alpha chain, which is derived from the carboxyl end of the proenzyme. The autoendoproteolytic cleavage occurs by a canonical serine protease mechanism, in which the side chain hydroxyl group of the serine supplies its oxygen atom to form the C-terminus of the beta chain, while the remainder of the serine residue undergoes an oxidative deamination to produce ammonia and the pyruvoyl prosthetic group on the alpha chain. During this reaction, the Ser that is part of the protease active site of the proenzyme becomes the pyruvoyl prosthetic group, which constitutes an essential element of the active site of the mature decarboxylase.

It localises to the cell membrane. The catalysed reaction is a 1,2-diacyl-sn-glycero-3-phospho-L-serine + H(+) = a 1,2-diacyl-sn-glycero-3-phosphoethanolamine + CO2. Its pathway is phospholipid metabolism; phosphatidylethanolamine biosynthesis; phosphatidylethanolamine from CDP-diacylglycerol: step 2/2. Catalyzes the formation of phosphatidylethanolamine (PtdEtn) from phosphatidylserine (PtdSer). The chain is Phosphatidylserine decarboxylase proenzyme from Salmonella typhi.